The following is a 216-amino-acid chain: Small ribosomal subunit protein uS3 (216 aa).

The 70-residue stretch at I24–S93 folds into the KH type-2 domain.

It belongs to the universal ribosomal protein uS3 family. Part of the 30S ribosomal subunit.

In terms of biological role, binds the lower part of the 30S subunit head. In Pyrobaculum calidifontis (strain DSM 21063 / JCM 11548 / VA1), this protein is Small ribosomal subunit protein uS3.